The primary structure comprises 414 residues: Myb1 protein (414 aa).

Myb-like domains follow at residues 242-266 (WNEVSEKLSNNQNAKECQKMWLYYG), 268-320 (FEDD…IKIN), and 328-381 (KVKL…TNLN).

The protein localises to the nucleus. Transcriptional activator. Has a role in the parasite erythrocytic cycle where it directly regulates key genes involved in cell cycle regulation and progression. Binds directly to Myb regulatory elements. The polypeptide is Myb1 protein (Plasmodium falciparum (isolate 3D7)).